A 161-amino-acid polypeptide reads, in one-letter code: MRTWFPYPLLSIALLLMWLLLSQSVTPGSIVLGLVVSTVLAWVTLNLQPARSRLHRWSRIAGFILRVVGDVIRSNIAVTLIILRAGRRPVNAGFMTVSLDLDDENALALLACVVTATPGTAWLEYDRRQKILLFHVLDIENEDLWRKTITRYAADLKEIFE.

The next 2 membrane-spanning stretches (helical) occupy residues 4-21 (WFPY…WLLL) and 28-50 (GSIV…LQPA).

It belongs to the CPA3 antiporters (TC 2.A.63) subunit E family. As to quaternary structure, may form a hetero-oligomeric complex that consists of six subunits: PhaAB, PhaC, PhaD, PhaE, PhaF and PhaG.

It is found in the cell membrane. In terms of biological role, part of a K(+) efflux system which is required for the adaptation of R.meliloti to alkaline pH as well as for the infection process during symbiotic nodule development. This is Probable K(+)/H(+) antiporter subunit E (phaE) from Rhizobium meliloti (strain 1021) (Ensifer meliloti).